We begin with the raw amino-acid sequence, 295 residues long: Small ribosomal subunit protein uS3 (295 aa).

The region spanning 39–107 (VREYLKKKLK…PVAVNIEEVR (69 aa)) is the KH type-2 domain. The tract at residues 213–295 (GTGAKMIEVA…AAAADGAKTE (83 aa)) is disordered. Residues 224–245 (EERKPRGPRRDARPGDRPDRGA) show a composition bias toward basic and acidic residues. Low complexity-rich tracts occupy residues 246 to 255 (PRGAPRAPRG) and 283 to 295 (AAPA…AKTE).

The protein belongs to the universal ribosomal protein uS3 family. In terms of assembly, part of the 30S ribosomal subunit. Forms a tight complex with proteins S10 and S14.

Its function is as follows. Binds the lower part of the 30S subunit head. Binds mRNA in the 70S ribosome, positioning it for translation. This is Small ribosomal subunit protein uS3 from Polaromonas naphthalenivorans (strain CJ2).